A 176-amino-acid chain; its full sequence is Peptide deformylase (176 aa).

Positions 95 and 137 each coordinate Fe cation. E138 is a catalytic residue. Fe cation is bound at residue H141.

It belongs to the polypeptide deformylase family. It depends on Fe(2+) as a cofactor.

The catalysed reaction is N-terminal N-formyl-L-methionyl-[peptide] + H2O = N-terminal L-methionyl-[peptide] + formate. Its function is as follows. Removes the formyl group from the N-terminal Met of newly synthesized proteins. Requires at least a dipeptide for an efficient rate of reaction. N-terminal L-methionine is a prerequisite for activity but the enzyme has broad specificity at other positions. The protein is Peptide deformylase of Hyphomonas neptunium (strain ATCC 15444).